Consider the following 245-residue polypeptide: uncharacterized protein (245 aa).

Residues 29-96 (RSLIEATFQR…AQRGFHVTPM (68 aa)) form the HTH gntR-type domain. The H-T-H motif DNA-binding region spans 56–75 (IEDLKSRYEVSGGTVREALS).

This is an uncharacterized protein from Paraburkholderia xenovorans (strain LB400).